The following is a 305-amino-acid chain: tRNA dimethylallyltransferase (305 aa).

8–15 (GPTAIGKS) serves as a coordination point for ATP. Residue 10-15 (TAIGKS) participates in substrate binding. The interval 33–36 (DSMA) is interaction with substrate tRNA.

Belongs to the IPP transferase family. Monomer. Mg(2+) is required as a cofactor.

It catalyses the reaction adenosine(37) in tRNA + dimethylallyl diphosphate = N(6)-dimethylallyladenosine(37) in tRNA + diphosphate. Functionally, catalyzes the transfer of a dimethylallyl group onto the adenine at position 37 in tRNAs that read codons beginning with uridine, leading to the formation of N6-(dimethylallyl)adenosine (i(6)A). In Aquifex aeolicus (strain VF5), this protein is tRNA dimethylallyltransferase.